A 461-amino-acid polypeptide reads, in one-letter code: Major capsid protein (461 aa).

The segment covering 1-18 (MSTPTISADTTAQNATST) has biased composition (polar residues). The interval 1–22 (MSTPTISADTTAQNATSTEVRE) is disordered.

It localises to the virion. Major protein of the capsid. This chain is Major capsid protein (MCP), found in Spodoptera frugiperda ascovirus 1a (SfAV-1a).